A 526-amino-acid chain; its full sequence is pH-sensitive chloride channel 2 (526 aa).

A signal peptide spans 1-18; that stretch reads MDTLGIFVLISYLGLSSA. The Extracellular portion of the chain corresponds to 19-300; the sequence is AGVHLGDLQQ…VLLTREVGYY (282 aa). Asparagine 33, asparagine 42, asparagine 52, asparagine 192, asparagine 231, asparagine 264, asparagine 271, and asparagine 283 each carry an N-linked (GlcNAc...) asparagine glycan. Residues 301–321 traverse the membrane as a helical segment; it reads VIDYFLPSIMIVTISWVSFWL. Residues 322 to 327 lie on the Cytoplasmic side of the membrane; it reads QADQTP. A helical membrane pass occupies residues 328–347; the sequence is ARTTLGCTTLLSFITLSLSQ. Residues 348–360 lie on the Extracellular side of the membrane; sequence ENNLMKVSYVTMS. A helical transmembrane segment spans residues 361 to 381; sequence EVWFLVCTIFIFGSLVEFAFV. At 382–505 the chain is on the cytoplasmic side; it reads NTIWRRNNDL…VSLWIDRKMR (124 aa). The tract at residues 463–488 is disordered; sequence ISLDEQDETSTSESSDSSKEKPAQTF. The helical transmembrane segment at 506-526 threads the bilayer; it reads FVFPLSFIVFNALFWTLVYCL.

It belongs to the ligand-gated ion channel (TC 1.A.9) family. As to expression, in third-instar larvae, expressed in the principal cells of the excretory Malpighian tubules (at protein level). Also detected in the enterocytes of the copper cell region and the iron cell region of the larval midgut (at protein level). In the copper cell region expression is confined to the interstitial cells and in the iron cell region it is expressed in the anterior portion (at protein level). Expressed in the Malpighian tubules and the middle midgut of third instar larvae and adults.

It localises to the apical cell membrane. Its subcellular location is the cell projection. It is found in the microvillus membrane. The protein resides in the late endosome membrane. The protein localises to the lysosome membrane. The catalysed reaction is chloride(in) = chloride(out). In terms of biological role, ligand and pH-gated channel that mediates chloride transport primarily in the mid-gut and thereby functions in larval metabolism and fluid homeostasis. Channel opening is triggered by zinc binding or, to a lesser extent, an increase in extracellular pH. Zinc-dependent activity in the mid-gut is required for modulating Tor-dependent metabolic programs that promote larval feeding and systematic growth. It may therefore act as an intestinal zinc sensor that mediates larval growth and metabolism in response to micronutrient availability. Activates Tor signaling via its activity in maintaining lysosome homeostasis in interstitial cells and/or by its role in activating the release of insulin-like peptides in the brain after feeding, via an unknown mechanism. Functions in lysosome homeostasis by regulating chloride transport into enterocyte lysosomes to sustain V-ATPase function which maintains lysosomal acidification and consequently promotes Tor activation at the lysosome membrane. Also appears to play a role in regulating fluid secretion and osmotic homeostasis in Malpighian tubules in response to the pH of extracellular urine. This function is important for proper urine production during diuresis. This is pH-sensitive chloride channel 2 from Drosophila melanogaster (Fruit fly).